Consider the following 363-residue polypeptide: Peptide chain release factor 1 (363 aa).

Q237 is subject to N5-methylglutamine.

This sequence belongs to the prokaryotic/mitochondrial release factor family. Post-translationally, methylated by PrmC. Methylation increases the termination efficiency of RF1.

The protein localises to the cytoplasm. Peptide chain release factor 1 directs the termination of translation in response to the peptide chain termination codons UAG and UAA. This is Peptide chain release factor 1 from Marinobacter nauticus (strain ATCC 700491 / DSM 11845 / VT8) (Marinobacter aquaeolei).